The following is a 381-amino-acid chain: Succinyl-diaminopimelate desuccinylase (381 aa).

A Zn(2+)-binding site is contributed by His-69. The active site involves Asp-71. Zn(2+) is bound at residue Asp-103. Residue Glu-137 is the Proton acceptor of the active site. The Zn(2+) site is built by Glu-138, Glu-166, and His-355.

Belongs to the peptidase M20A family. DapE subfamily. In terms of assembly, homodimer. The cofactor is Zn(2+). Requires Co(2+) as cofactor.

The enzyme catalyses N-succinyl-(2S,6S)-2,6-diaminopimelate + H2O = (2S,6S)-2,6-diaminopimelate + succinate. It functions in the pathway amino-acid biosynthesis; L-lysine biosynthesis via DAP pathway; LL-2,6-diaminopimelate from (S)-tetrahydrodipicolinate (succinylase route): step 3/3. In terms of biological role, catalyzes the hydrolysis of N-succinyl-L,L-diaminopimelic acid (SDAP), forming succinate and LL-2,6-diaminopimelate (DAP), an intermediate involved in the bacterial biosynthesis of lysine and meso-diaminopimelic acid, an essential component of bacterial cell walls. This Rickettsia akari (strain Hartford) protein is Succinyl-diaminopimelate desuccinylase.